The chain runs to 156 residues: Small ribosomal subunit protein uS7 (156 aa).

It belongs to the universal ribosomal protein uS7 family. In terms of assembly, part of the 30S ribosomal subunit. Contacts proteins S9 and S11.

Its function is as follows. One of the primary rRNA binding proteins, it binds directly to 16S rRNA where it nucleates assembly of the head domain of the 30S subunit. Is located at the subunit interface close to the decoding center, probably blocks exit of the E-site tRNA. The protein is Small ribosomal subunit protein uS7 of Levilactobacillus brevis (strain ATCC 367 / BCRC 12310 / CIP 105137 / JCM 1170 / LMG 11437 / NCIMB 947 / NCTC 947) (Lactobacillus brevis).